A 396-amino-acid polypeptide reads, in one-letter code: Tryptophan synthase beta chain (396 aa).

Lys86 is modified (N6-(pyridoxal phosphate)lysine).

It belongs to the TrpB family. Tetramer of two alpha and two beta chains. The cofactor is pyridoxal 5'-phosphate.

It carries out the reaction (1S,2R)-1-C-(indol-3-yl)glycerol 3-phosphate + L-serine = D-glyceraldehyde 3-phosphate + L-tryptophan + H2O. Its pathway is amino-acid biosynthesis; L-tryptophan biosynthesis; L-tryptophan from chorismate: step 5/5. Its function is as follows. The beta subunit is responsible for the synthesis of L-tryptophan from indole and L-serine. The sequence is that of Tryptophan synthase beta chain from Vibrio campbellii (strain ATCC BAA-1116).